A 387-amino-acid polypeptide reads, in one-letter code: GTP-binding protein 10 (387 aa).

The 136-residue stretch at 13-148 (GNFIDKLRLF…RIIHLDLKLI (136 aa)) folds into the Obg domain. Residues 149-344 (ADVGLVGFPN…LKNCIRKSLD (196 aa)) form the OBG-type G domain. Residues 155 to 162 (GFPNAGKS), 202 to 206 (DLPGL), and 278 to 281 (NKMD) each bind GTP.

This sequence belongs to the TRAFAC class OBG-HflX-like GTPase superfamily. OBG GTPase family.

The protein resides in the nucleus. Its subcellular location is the nucleolus. It localises to the chromosome. Functionally, may be involved in the ribosome maturation process. Complements an ObgE(CgtA) function in E.coli ribosome maturation. Plays a role of GTPase in vitro. When missing, disorganization of the nucleolar architecture is observed. This chain is GTP-binding protein 10 (GTPBP10), found in Homo sapiens (Human).